Reading from the N-terminus, the 488-residue chain is MPEDVQNRTRIKSERYESGVIPYAKMGYWDADYNVKDTDILALFRITPQPGVDPVEARAAVAGESSTATWTVVWTDLLTACDIYRAKAYRVDPVPGTSDQFFAYIAYECDLFEEGSLANLTASIIGNVFGFKAVKALRLEDMRIPYAYLKTFQGPATGVVVERERLDKFGRPLLGATVKPKLGLSGKNYGRVVYEGLAGGLDFLKDDENINSQPFMRWKERFLYCMEGVNRAAAATGEVKGSYLNITAATMEQMYERAEYAHSIGSVIVMIDLVIGYTAIQSMAIWARKYEMILHLHRAGNSTYARQKNHGINFRVICKWMRMCGVDHIHAGTVVGKLEGDPLMVKGFYNSLLLTHLKINLAEGLFFDMDWAALRKCVPVASGGIHCGQMHQLLYYLGDDVVLQFGGGTIGHPDGIQSGATANRVALESMVLARNEGRDYVGEGPEILRRAAATCGPLKAALDLWKDITFDYTSTDTPDFVEVATESR.

Substrate contacts are provided by Asn127 and Thr177. Lys179 serves as the catalytic Proton acceptor. Substrate is bound at residue Lys181. Lys205, Asp207, and Glu208 together coordinate Mg(2+). N6-carboxylysine is present on Lys205. The Proton acceptor role is filled by His297. Substrate is bound by residues Arg298, His330, and Ser382.

It belongs to the RuBisCO large chain family. Type I subfamily. As to quaternary structure, heterohexadecamer of 8 large chains and 8 small chains. Mg(2+) is required as a cofactor.

Its subcellular location is the plastid. It is found in the chloroplast. The enzyme catalyses 2 (2R)-3-phosphoglycerate + 2 H(+) = D-ribulose 1,5-bisphosphate + CO2 + H2O. It carries out the reaction D-ribulose 1,5-bisphosphate + O2 = 2-phosphoglycolate + (2R)-3-phosphoglycerate + 2 H(+). Functionally, ruBisCO catalyzes two reactions: the carboxylation of D-ribulose 1,5-bisphosphate, the primary event in carbon dioxide fixation, as well as the oxidative fragmentation of the pentose substrate in the photorespiration process. Both reactions occur simultaneously and in competition at the same active site. The sequence is that of Ribulose bisphosphate carboxylase large chain from Pylaiella littoralis (Seaweed).